The chain runs to 2312 residues: Protein Ycf2 (2312 aa).

G1630 to S1637 is an ATP binding site.

This sequence belongs to the Ycf2 family.

The protein resides in the plastid. Its subcellular location is the chloroplast stroma. Functionally, probable ATPase of unknown function. Its presence in a non-photosynthetic plant (Epifagus virginiana) and experiments in tobacco indicate that it has an essential function which is probably not related to photosynthesis. This Manihot esculenta (Cassava) protein is Protein Ycf2.